A 605-amino-acid polypeptide reads, in one-letter code: Arginyl-tRNA--protein transferase 2 (605 aa).

The span at lysine 496–serine 513 shows a compositional bias: low complexity. The disordered stretch occupies residues lysine 496 to arginine 549. Residues glutamate 518–serine 541 are compositionally biased toward acidic residues.

Belongs to the R-transferase family.

The enzyme catalyses an N-terminal L-alpha-aminoacyl-[protein] + L-arginyl-tRNA(Arg) = an N-terminal L-arginyl-L-aminoacyl-[protein] + tRNA(Arg) + H(+). In terms of biological role, involved in the post-translational conjugation of arginine to the N-terminal aspartate or glutamate of a protein. This arginylation is required for degradation of the protein via the ubiquitin pathway. Component of the N-end rule pathway with ATE1 and PRT6. The N-end rule pathway regulates seed after-ripening, seedling sugar sensitivity, seedling lipid breakdown, and abscisic acid (ABA) sensitivity of germination. The end-rule pathway regulates various aspects of leaf and shoot development. Involved in the oxygen-dependent N-arginylation of RAP2-12, an activator of hypoxic gene expression. This N-terminal modification leads to ubiquitination by PRT6 and subsequent degradation of RAP2-12 under aerobic conditions. Involved in disease resistance. The end-rule pathway plays a role in regulating the timing and amplitude of the immune response following infection with the bacterial pathogen Pseudomonas syringae pv tomato. Regulates the biosynthesis of plant-defense metabolites such as glucosinolates, and the biosynthesis and response to the phytohormone jasmonate (JA), which plays a key role in plant immunity. The protein is Arginyl-tRNA--protein transferase 2 of Arabidopsis thaliana (Mouse-ear cress).